The chain runs to 219 residues: MEQQQPQQQNDGQQQQQQQQQHQQQQQQQQQQQQQQQQSEQERIYNKKQEHLPLLQTVEELVEELRRSLIVVEEFQTPSQQLLFDKLNKIINLYEKIESNRHIVNDVEIPLEIFRVIDQSKNPDLYVKETLQNCLSANEKTKGKIESIKNFKKELESHISESFASEYAEYKLLTQKKETQEQQNDDQIKVDDSNNNNNNNNNNNYNNNNNNNNNNINNN.

Over residues 1–39 the composition is skewed to low complexity; that stretch reads MEQQQPQQQNDGQQQQQQQQQHQQQQQQQQQQQQQQQQS. Disordered regions lie at residues 1-42 and 177-219; these read MEQQ…SEQE and KETQ…INNN. Coiled-coil stretches lie at residues 13–74 and 166–219; these read QQQQ…VVEE and EYAE…INNN. A compositionally biased stretch (basic and acidic residues) spans 177–192; the sequence is KETQEQQNDDQIKVDD. Residues 194 to 219 are compositionally biased toward low complexity; the sequence is NNNNNNNNNNNYNNNNNNNNNNINNN.

The protein belongs to the Mediator complex subunit 10 family. As to quaternary structure, component of the Mediator complex.

Its subcellular location is the nucleus. Its function is as follows. Component of the Mediator complex, a coactivator involved in the regulated transcription of nearly all RNA polymerase II-dependent genes. Mediator functions as a bridge to convey information from gene-specific regulatory proteins to the basal RNA polymerase II transcription machinery. Mediator is recruited to promoters by direct interactions with regulatory proteins and serves as a scaffold for the assembly of a functional preinitiation complex with RNA polymerase II and the general transcription factors. The polypeptide is Putative mediator of RNA polymerase II transcription subunit 10 (med10) (Dictyostelium discoideum (Social amoeba)).